A 346-amino-acid chain; its full sequence is MKTYNVAIVGASGAVGQELIKGLENSFFPIKKFVPLASARSAGKKIRAFNKDYEILETTHEVFEKEEIDIAFFSAGGSVSEEFAISASKTALVIDNTSFFRLNKDVPLVVPEINAQEIFNAPLNIIANPNCSTIQMTQILNPLHLHFKIKSVIVSTYQAVSGAGNKGIESLKNELKTALEHLEKDPAIDLNQVLQAGAFAYPIAFNAIAHIDTFKENGYTKEELKMVHETHKIMGVDFPISATCVRVPVLRSHSESLSIAFEKEFDLKEVYEVLKNAPSVVVCDDPSHNLYPTPLKASHTDSVFIGRLRKDLFDKKTLHGFCVADQLRVGAATNALKIALHYIKNA.

NADP(+)-binding positions include 12–15 and 40–41; these read SGAV and RS. R101 provides a ligand contact to phosphate. C131 serves as the catalytic Acyl-thioester intermediate. Q158 contacts substrate. 161-162 provides a ligand contact to NADP(+); the sequence is SG. K225 contributes to the phosphate binding site. R246 provides a ligand contact to substrate. Catalysis depends on H253, which acts as the Proton acceptor. Q326 is a binding site for NADP(+).

This sequence belongs to the aspartate-semialdehyde dehydrogenase family. In terms of assembly, homodimer.

It carries out the reaction L-aspartate 4-semialdehyde + phosphate + NADP(+) = 4-phospho-L-aspartate + NADPH + H(+). It participates in amino-acid biosynthesis; L-lysine biosynthesis via DAP pathway; (S)-tetrahydrodipicolinate from L-aspartate: step 2/4. Its pathway is amino-acid biosynthesis; L-methionine biosynthesis via de novo pathway; L-homoserine from L-aspartate: step 2/3. It functions in the pathway amino-acid biosynthesis; L-threonine biosynthesis; L-threonine from L-aspartate: step 2/5. Its function is as follows. Catalyzes the NADPH-dependent formation of L-aspartate-semialdehyde (L-ASA) by the reductive dephosphorylation of L-aspartyl-4-phosphate. The sequence is that of Aspartate-semialdehyde dehydrogenase from Helicobacter pylori (strain J99 / ATCC 700824) (Campylobacter pylori J99).